A 286-amino-acid polypeptide reads, in one-letter code: Isopentenyl-diphosphate Delta-isomerase II (286 aa).

A Nudix hydrolase domain is found at 104–256 (MLHRAFSVFL…GLKLSPWFRL (153 aa)). Residues Cys-141 and Glu-203 contribute to the active site.

It belongs to the IPP isomerase type 1 family.

It catalyses the reaction isopentenyl diphosphate = dimethylallyl diphosphate. It functions in the pathway isoprenoid biosynthesis; dimethylallyl diphosphate biosynthesis; dimethylallyl diphosphate from isopentenyl diphosphate: step 1/1. The protein operates within porphyrin-containing compound metabolism; chlorophyll biosynthesis. Functionally, catalyzes the 1,3-allylic rearrangement of the homoallylic substrate isopentenyl (IPP) to its highly electrophilic allylic isomer, dimethylallyl diphosphate (DMAPP). This is Isopentenyl-diphosphate Delta-isomerase II (IPI2) from Clarkia breweri (Fairy fans).